Reading from the N-terminus, the 166-residue chain is MAKTLSKPASGALAPWLGISLIVILFDQLSKIAILKTFAYGAQHALTSFFNLVLVYNRGAAFGFLSTASGWQRWAFTALGIGATLVICYLLRRHGQQRLFSLSLALILGGALGNVIDRLLYGHVIDFLDFHLGGWHFPAFNLADSAITVGAVLLIYDELRRVRGTR.

4 helical membrane passes run 9–29 (ASGALAPWLGISLIVILFDQL), 45–65 (ALTSFFNLVLVYNRGAAFGFL), 71–91 (WQRWAFTALGIGATLVICYLL), and 99–119 (LFSLSLALILGGALGNVIDRL). Catalysis depends on residues D126 and D144. A helical transmembrane segment spans residues 135-155 (WHFPAFNLADSAITVGAVLLI).

It belongs to the peptidase A8 family.

The protein localises to the cell inner membrane. It catalyses the reaction Release of signal peptides from bacterial membrane prolipoproteins. Hydrolyzes -Xaa-Yaa-Zaa-|-(S,diacylglyceryl)Cys-, in which Xaa is hydrophobic (preferably Leu), and Yaa (Ala or Ser) and Zaa (Gly or Ala) have small, neutral side chains.. It participates in protein modification; lipoprotein biosynthesis (signal peptide cleavage). In terms of biological role, this protein specifically catalyzes the removal of signal peptides from prolipoproteins. The protein is Lipoprotein signal peptidase of Burkholderia vietnamiensis (strain G4 / LMG 22486) (Burkholderia cepacia (strain R1808)).